The chain runs to 607 residues: Guanine nucleotide-binding protein-like 1 (607 aa).

A compositionally biased stretch (basic residues) spans 1–14 (MPRKKPFSVKQKKK). The segment at 1–81 (MPRKKPFSVK…GPRGYDPNRY (81 aa)) is disordered. Positions 15–26 (QLQDKRERKRGL) are enriched in basic and acidic residues. Ser-32, Ser-33, and Ser-34 each carry phosphoserine. Phosphothreonine is present on residues Thr-48 and Thr-50. 2 positions are modified to phosphoserine: Ser-51 and Ser-68. The CP-type G domain maps to 178-418 (WRQLWRVLEM…LCDCPGLIFP (241 aa)). 225 to 228 (NKVD) is a GTP binding site. The residue at position 324 (Ser-324) is a Phosphoserine. GTP is bound by residues 367–374 (GFPNVGKS) and 411–415 (DCPGL). The segment at 544–607 (GRVGPAGDEE…PYALLGEDEC (64 aa)) is disordered. Residues 550-585 (GDEEEEEEEELSSSCEEEGEEDRDADEEGEGDEDTP) are compositionally biased toward acidic residues. 3 positions are modified to phosphoserine: Ser-561, Ser-562, and Ser-563.

This sequence belongs to the TRAFAC class YlqF/YawG GTPase family.

Functionally, possible regulatory or functional link with the histocompatibility cluster. The sequence is that of Guanine nucleotide-binding protein-like 1 (Gnl1) from Mus musculus (Mouse).